Consider the following 740-residue polypeptide: Phosphoribosylformylglycinamidine synthase subunit PurL (740 aa).

Histidine 53 is an active-site residue. The ATP site is built by tyrosine 56 and lysine 95. Glutamate 97 contributes to the Mg(2+) binding site. Substrate is bound by residues 98 to 101 (SHNH) and arginine 120. Histidine 99 functions as the Proton acceptor in the catalytic mechanism. Mg(2+) is bound at residue aspartate 121. Glutamine 244 contributes to the substrate binding site. Aspartate 272 contacts Mg(2+). 316–318 (ESQ) serves as a coordination point for substrate. Residues aspartate 497 and glycine 534 each coordinate ATP. Asparagine 535 provides a ligand contact to Mg(2+). Substrate is bound at residue serine 537.

Belongs to the FGAMS family. As to quaternary structure, monomer. Part of the FGAM synthase complex composed of 1 PurL, 1 PurQ and 2 PurS subunits.

It is found in the cytoplasm. The enzyme catalyses N(2)-formyl-N(1)-(5-phospho-beta-D-ribosyl)glycinamide + L-glutamine + ATP + H2O = 2-formamido-N(1)-(5-O-phospho-beta-D-ribosyl)acetamidine + L-glutamate + ADP + phosphate + H(+). The protein operates within purine metabolism; IMP biosynthesis via de novo pathway; 5-amino-1-(5-phospho-D-ribosyl)imidazole from N(2)-formyl-N(1)-(5-phospho-D-ribosyl)glycinamide: step 1/2. Functionally, part of the phosphoribosylformylglycinamidine synthase complex involved in the purines biosynthetic pathway. Catalyzes the ATP-dependent conversion of formylglycinamide ribonucleotide (FGAR) and glutamine to yield formylglycinamidine ribonucleotide (FGAM) and glutamate. The FGAM synthase complex is composed of three subunits. PurQ produces an ammonia molecule by converting glutamine to glutamate. PurL transfers the ammonia molecule to FGAR to form FGAM in an ATP-dependent manner. PurS interacts with PurQ and PurL and is thought to assist in the transfer of the ammonia molecule from PurQ to PurL. This Rhodospirillum rubrum (strain ATCC 11170 / ATH 1.1.1 / DSM 467 / LMG 4362 / NCIMB 8255 / S1) protein is Phosphoribosylformylglycinamidine synthase subunit PurL.